Consider the following 332-residue polypeptide: 2,3-diketo-L-gulonate reductase (332 aa).

His-44 functions as the Proton donor in the catalytic mechanism. Residues 168-174, 224-225, and 304-306 each bind NAD(+); these read ITMVDMS, WK, and GHE.

This sequence belongs to the LDH2/MDH2 oxidoreductase family. DlgD subfamily. As to quaternary structure, homodimer.

Its subcellular location is the cytoplasm. The enzyme catalyses 3-dehydro-L-gulonate + NAD(+) = 2,3-dioxo-L-gulonate + NADH + H(+). It carries out the reaction 3-dehydro-L-gulonate + NADP(+) = 2,3-dioxo-L-gulonate + NADPH + H(+). Functionally, catalyzes the reduction of 2,3-diketo-L-gulonate in the presence of NADH, to form 3-keto-L-gulonate. This is 2,3-diketo-L-gulonate reductase from Klebsiella pneumoniae (strain 342).